A 142-amino-acid chain; its full sequence is Small ribosomal subunit protein uS12 (142 aa).

This sequence belongs to the universal ribosomal protein uS12 family. Part of the 30S ribosomal subunit.

Its function is as follows. With S4 and S5 plays an important role in translational accuracy. Located at the interface of the 30S and 50S subunits. The sequence is that of Small ribosomal subunit protein uS12 from Methanococcoides burtonii (strain DSM 6242 / NBRC 107633 / OCM 468 / ACE-M).